We begin with the raw amino-acid sequence, 498 residues long: ATP synthase subunit beta, chloroplastic (498 aa).

172–179 contributes to the ATP binding site; it reads GGAGVGKT.

It belongs to the ATPase alpha/beta chains family. As to quaternary structure, F-type ATPases have 2 components, CF(1) - the catalytic core - and CF(0) - the membrane proton channel. CF(1) has five subunits: alpha(3), beta(3), gamma(1), delta(1), epsilon(1). CF(0) has four main subunits: a(1), b(1), b'(1) and c(9-12).

It is found in the plastid. The protein localises to the chloroplast thylakoid membrane. It catalyses the reaction ATP + H2O + 4 H(+)(in) = ADP + phosphate + 5 H(+)(out). Produces ATP from ADP in the presence of a proton gradient across the membrane. The catalytic sites are hosted primarily by the beta subunits. This Nymphaea alba (White water-lily) protein is ATP synthase subunit beta, chloroplastic.